Here is a 222-residue protein sequence, read N- to C-terminus: Imidazoleglycerol-phosphate dehydratase (222 aa).

The protein belongs to the imidazoleglycerol-phosphate dehydratase family.

It carries out the reaction D-erythro-1-(imidazol-4-yl)glycerol 3-phosphate = 3-(imidazol-4-yl)-2-oxopropyl phosphate + H2O. It functions in the pathway amino-acid biosynthesis; L-histidine biosynthesis; L-histidine from 5-phospho-alpha-D-ribose 1-diphosphate: step 6/9. This Scheffersomyces stipitis (strain ATCC 58785 / CBS 6054 / NBRC 10063 / NRRL Y-11545) (Yeast) protein is Imidazoleglycerol-phosphate dehydratase (HIS3).